We begin with the raw amino-acid sequence, 58 residues long: Small ribosomal subunit protein bS21C (58 aa).

A disordered region spans residues 38 to 58 (YEKPSLRRKRKAEAARKGGRY). Positions 49-58 (AEAARKGGRY) are enriched in basic and acidic residues.

It belongs to the bacterial ribosomal protein bS21 family.

This Nostoc sp. (strain PCC 7120 / SAG 25.82 / UTEX 2576) protein is Small ribosomal subunit protein bS21C (rpsU3).